Consider the following 239-residue polypeptide: Acyl-protein thioesterase 1 (239 aa).

Residues Ser124, Asp180, and His213 each act as charge relay system in the active site.

It belongs to the AB hydrolase superfamily. AB hydrolase 2 family.

It is found in the cytoplasm. The protein localises to the nucleus. The catalysed reaction is S-hexadecanoyl-L-cysteinyl-[protein] + H2O = L-cysteinyl-[protein] + hexadecanoate + H(+). Its function is as follows. Hydrolyzes fatty acids from S-acylated cysteine residues in proteins with a strong preference for palmitoylated G-alpha proteins over other acyl substrates. Mediates the deacylation of G-alpha proteins such as GPA1 in vivo, but has weak or no activity toward palmitoylated Ras proteins. Has weak lysophospholipase activity in vitro; however such activity may not exist in vivo. The polypeptide is Acyl-protein thioesterase 1 (Emericella nidulans (strain FGSC A4 / ATCC 38163 / CBS 112.46 / NRRL 194 / M139) (Aspergillus nidulans)).